The primary structure comprises 422 residues: Dihydrolipoyllysine-residue succinyltransferase component of 2-oxoglutarate dehydrogenase complex (422 aa).

The Lipoyl-binding domain occupies 1 to 76; it reads MPEVKVPELA…EVGQAIAVIG (76 aa). Position 42 is an N6-lipoyllysine (Lys42). Residues 77 to 184 form a disordered region; that stretch reads EGSGNASKEN…APAKEEKKYN (108 aa). 2 stretches are compositionally biased toward polar residues: residues 80–94 and 114–130; these read GNAS…TPQQ and EVNQ…NATP. One can recognise a Peripheral subunit-binding (PSBD) domain in the interval 127 to 163; that stretch reads NATPSARRYARENGVNLAEVSPKTNDVVRKEDIDKKQ. The span at 152 to 163 shows a compositional bias: basic and acidic residues; the sequence is DVVRKEDIDKKQ. A compositionally biased stretch (low complexity) spans 164–176; sequence QAPASTQTTQQAP. Active-site residues include His393 and Asp397.

Belongs to the 2-oxoacid dehydrogenase family. As to quaternary structure, forms a 24-polypeptide structural core with octahedral symmetry. Part of the 2-oxoglutarate dehydrogenase (OGDH) complex composed of E1 (2-oxoglutarate dehydrogenase), E2 (dihydrolipoamide succinyltransferase) and E3 (dihydrolipoamide dehydrogenase); the complex contains multiple copies of the three enzymatic components (E1, E2 and E3). It depends on (R)-lipoate as a cofactor.

It catalyses the reaction N(6)-[(R)-dihydrolipoyl]-L-lysyl-[protein] + succinyl-CoA = N(6)-[(R)-S(8)-succinyldihydrolipoyl]-L-lysyl-[protein] + CoA. Its pathway is amino-acid degradation; L-lysine degradation via saccharopine pathway; glutaryl-CoA from L-lysine: step 6/6. Its function is as follows. E2 component of the 2-oxoglutarate dehydrogenase (OGDH) complex which catalyzes the second step in the conversion of 2-oxoglutarate to succinyl-CoA and CO(2). This chain is Dihydrolipoyllysine-residue succinyltransferase component of 2-oxoglutarate dehydrogenase complex (odhB), found in Staphylococcus aureus (strain bovine RF122 / ET3-1).